The following is a 209-amino-acid chain: Uracil phosphoribosyltransferase (209 aa).

5-phospho-alpha-D-ribose 1-diphosphate-binding positions include arginine 79, arginine 104, and 131 to 139; that span reads DPMLATGGS. Uracil contacts are provided by residues isoleucine 194 and 199-201; that span reads GDA. A 5-phospho-alpha-D-ribose 1-diphosphate-binding site is contributed by aspartate 200.

Belongs to the UPRTase family. Requires Mg(2+) as cofactor.

It catalyses the reaction UMP + diphosphate = 5-phospho-alpha-D-ribose 1-diphosphate + uracil. It participates in pyrimidine metabolism; UMP biosynthesis via salvage pathway; UMP from uracil: step 1/1. Its activity is regulated as follows. Allosterically activated by GTP. Its function is as follows. Catalyzes the conversion of uracil and 5-phospho-alpha-D-ribose 1-diphosphate (PRPP) to UMP and diphosphate. The chain is Uracil phosphoribosyltransferase from Lactobacillus gasseri (strain ATCC 33323 / DSM 20243 / BCRC 14619 / CIP 102991 / JCM 1131 / KCTC 3163 / NCIMB 11718 / NCTC 13722 / AM63).